A 152-amino-acid chain; its full sequence is Homeobox protein ceh-63 (152 aa).

Polar residues predominate over residues 21-30 (NDTNSSQQIK). Disordered regions lie at residues 21–48 (NDTN…RTTF) and 92–126 (RRTK…SQHV). Residues 35 to 44 (PPKRSNRPTK) are compositionally biased toward basic residues. The homeobox DNA-binding region spans 41-100 (RPTKRTTFTSEQVTLLELEFAKNEYICKDRRGELAQTIELTECQVKTWFQNRRTKKRRCT). Residues 116 to 126 (PSPQNPSSQHV) are compositionally biased toward polar residues.

As to quaternary structure, may interact with homeobox protein ceh-14.

It localises to the nucleus. Its function is as follows. Probable transcription factor, modulating expression of helix-loop-helix protein mbr-1, perhaps acting in concert with homeobox protein ceh-14. May play a minor role in axon guidance in the DVC interneuron. This chain is Homeobox protein ceh-63, found in Caenorhabditis elegans.